Here is a 418-residue protein sequence, read N- to C-terminus: LL-diaminopimelate aminotransferase (418 aa).

Residues Tyr25 and Gly52 each coordinate substrate. Residues Tyr78, 115 to 116 (SK), Tyr140, Asn190, Tyr221, and 248 to 250 (SFS) each bind pyridoxal 5'-phosphate. Residues Lys116, Tyr140, and Asn190 each coordinate substrate. The residue at position 251 (Lys251) is an N6-(pyridoxal phosphate)lysine. Arg259 is a pyridoxal 5'-phosphate binding site.

It belongs to the class-I pyridoxal-phosphate-dependent aminotransferase family. Homodimer. Pyridoxal 5'-phosphate is required as a cofactor.

It is found in the cytoplasm. The enzyme catalyses (2S,6S)-2,6-diaminopimelate + 2-oxoglutarate = (S)-2,3,4,5-tetrahydrodipicolinate + L-glutamate + H2O + H(+). The protein operates within amino-acid biosynthesis; L-lysine biosynthesis via DAP pathway; LL-2,6-diaminopimelate from (S)-tetrahydrodipicolinate (aminotransferase route): step 1/1. Involved in the synthesis of meso-diaminopimelate (m-DAP or DL-DAP), required for both lysine and peptidoglycan biosynthesis. Catalyzes the direct conversion of tetrahydrodipicolinate to LL-diaminopimelate, a reaction that requires three enzymes in E.coli. The polypeptide is LL-diaminopimelate aminotransferase (dapL) (Methanocaldococcus jannaschii (strain ATCC 43067 / DSM 2661 / JAL-1 / JCM 10045 / NBRC 100440) (Methanococcus jannaschii)).